The sequence spans 276 residues: uncharacterized protein (276 aa).

The propeptide at 1 to 4 (MNRG) is leader sequence. N-methylmethionine is present on Met5. The chain crosses the membrane as a helical span at residues 5-26 (MTLIELLVALALSIILSLGLYY).

The protein localises to the membrane. This is an uncharacterized protein from Aquifex aeolicus (strain VF5).